Reading from the N-terminus, the 358-residue chain is MFGGVKWSPQSWMSDTRSSIEKKCIGQVYMVGAHNAGTHGIQMFSPFGLDAPEKLRSLPPYVTFLLRFLTVGVSSRWGRCQNLSIRQLLDHGVRYLDLRMNISPDQENKIYTTHFHISVPLQEVLKDVKDFLTTPASANEFVILDFLHFYGFNESHTMKRFVEELQALEEFYIPTTVSLTTPLCNLWQSTRRIFLVVRPYVEYPYARLRSVALKSIWVNQMELNDLLDRLEELMTRDLEDVSIGGVPSKMYVTQAIGTPRNNDFAVAACCGACPGSHPDLYSAAKHKNPHLLKWFYDLNVNGVMRGERVTIRRGNNTHGNILLLDFVQEGTCTVKGVDKPMNAVALCVHLNTNQTARS.

One can recognise a PI-PLC X-box domain in the interval 25 to 198; it reads IGQVYMVGAH…STRRIFLVVR (174 aa).

Monomer. Post-translationally, the N-terminus is blocked.

Its subcellular location is the membrane. The catalysed reaction is a 6-(alpha-D-glucosaminyl)-1-(1,2-diacyl-sn-glycero-3-phospho)-1D-myo-inositol = 6-(alpha-D-glucosaminyl)-1D-myo-inositol 1,2-cyclic phosphate + a 1,2-diacyl-sn-glycerol. Its function is as follows. By hydrolysis of the attached glycolipid, releases soluble variant surface glycoprotein containing phosphoinositol from the cell wall of T.brucei after cell lysis. It also cleaves similar membrane anchors on some mammalian proteins. VSG lipase may play a role in processes such as parasite differentiation or antigenic variation. This Trypanosoma brucei brucei protein is Variant-surface-glycoprotein phospholipase C.